Reading from the N-terminus, the 181-residue chain is Sodium/potassium-transporting ATPase subunit beta-1-interacting protein 3 (181 aa).

A run of 4 helical transmembrane segments spans residues 5–22 (TGRCTLIFICTLQMLVAL), 35–55 (APILGNFLHIIVVILGLFGTI), 62–82 (IVAYTIWTAFWVAWNVFIICF), and 151–171 (AVQILLSLIGFVYACYVISVI).

The protein belongs to the NKAIN family. In terms of assembly, interacts with atp1b1 C-terminus.

It localises to the cell membrane. The sequence is that of Sodium/potassium-transporting ATPase subunit beta-1-interacting protein 3 (nkain3) from Xenopus tropicalis (Western clawed frog).